We begin with the raw amino-acid sequence, 736 residues long: Phosphoribosylformylglycinamidine synthase subunit PurL (736 aa).

The active site involves His-49. Residues Tyr-52 and Lys-91 each contribute to the ATP site. Glu-93 contacts Mg(2+). Residues 94 to 97 (SHNH) and Arg-116 contribute to the substrate site. The active-site Proton acceptor is the His-95. Mg(2+) is bound at residue Asp-117. Substrate is bound at residue Gln-240. Position 268 (Asp-268) interacts with Mg(2+). 312–314 (ESQ) is a binding site for substrate. ATP is bound by residues Asp-493 and Gly-530. Asn-531 provides a ligand contact to Mg(2+). Ser-533 contributes to the substrate binding site.

This sequence belongs to the FGAMS family. Monomer. Part of the FGAM synthase complex composed of 1 PurL, 1 PurQ and 2 PurS subunits.

It localises to the cytoplasm. The enzyme catalyses N(2)-formyl-N(1)-(5-phospho-beta-D-ribosyl)glycinamide + L-glutamine + ATP + H2O = 2-formamido-N(1)-(5-O-phospho-beta-D-ribosyl)acetamidine + L-glutamate + ADP + phosphate + H(+). The protein operates within purine metabolism; IMP biosynthesis via de novo pathway; 5-amino-1-(5-phospho-D-ribosyl)imidazole from N(2)-formyl-N(1)-(5-phospho-D-ribosyl)glycinamide: step 1/2. In terms of biological role, part of the phosphoribosylformylglycinamidine synthase complex involved in the purines biosynthetic pathway. Catalyzes the ATP-dependent conversion of formylglycinamide ribonucleotide (FGAR) and glutamine to yield formylglycinamidine ribonucleotide (FGAM) and glutamate. The FGAM synthase complex is composed of three subunits. PurQ produces an ammonia molecule by converting glutamine to glutamate. PurL transfers the ammonia molecule to FGAR to form FGAM in an ATP-dependent manner. PurS interacts with PurQ and PurL and is thought to assist in the transfer of the ammonia molecule from PurQ to PurL. The protein is Phosphoribosylformylglycinamidine synthase subunit PurL of Rhodopseudomonas palustris (strain BisB5).